Here is a 180-residue protein sequence, read N- to C-terminus: 3-deoxy-D-manno-octulosonate 8-phosphate phosphatase KdsC (180 aa).

Asp14 and Asp16 together coordinate Mg(2+). Substrate-binding positions include Asp16, 37 to 41, Lys45, Arg60, Arg68, and Lys84; that span reads HVRDG. Residue Asp107 coordinates Mg(2+).

Belongs to the KdsC family. Homotetramer. It depends on Mg(2+) as a cofactor.

It carries out the reaction 3-deoxy-alpha-D-manno-2-octulosonate-8-phosphate + H2O = 3-deoxy-alpha-D-manno-oct-2-ulosonate + phosphate. Catalyzes the hydrolysis of 3-deoxy-D-manno-octulosonate 8-phosphate (KDO 8-P) to 3-deoxy-D-manno-octulosonate (KDO) and inorganic phosphate. The polypeptide is 3-deoxy-D-manno-octulosonate 8-phosphate phosphatase KdsC (Haemophilus influenzae (strain ATCC 51907 / DSM 11121 / KW20 / Rd)).